A 432-amino-acid polypeptide reads, in one-letter code: Glutamyl-tRNA reductase (432 aa).

Substrate-binding positions include 49–52 (TCNR), Ser-107, 112–114 (ETQ), and Gln-118. Cys-50 functions as the Nucleophile in the catalytic mechanism. An NADP(+)-binding site is contributed by 186–191 (GAGEMG).

It belongs to the glutamyl-tRNA reductase family. Homodimer.

The enzyme catalyses (S)-4-amino-5-oxopentanoate + tRNA(Glu) + NADP(+) = L-glutamyl-tRNA(Glu) + NADPH + H(+). The protein operates within porphyrin-containing compound metabolism; protoporphyrin-IX biosynthesis; 5-aminolevulinate from L-glutamyl-tRNA(Glu): step 1/2. In terms of biological role, catalyzes the NADPH-dependent reduction of glutamyl-tRNA(Glu) to glutamate 1-semialdehyde (GSA). This is Glutamyl-tRNA reductase from Campylobacter jejuni subsp. jejuni serotype O:23/36 (strain 81-176).